The chain runs to 386 residues: Patatin-T5 (386 aa).

The N-terminal stretch at 1–23 is a signal peptide; it reads MATTNSFTILIFMILATTSSTFA. The PNPLA domain maps to 32–229; sequence LSIDGGGIKG…TVDDPALLSI (198 aa). The GXGXXG signature appears at 36-41; that stretch reads GGGIKG. An N-linked (GlcNAc...) asparagine glycan is attached at Asn-60. Residues 75–79 carry the GXSXG motif; that stretch reads GTSTG. Ser-77 (nucleophile) is an active-site residue. Residues Asn-90 and Asn-202 are each glycosylated (N-linked (GlcNAc...) asparagine). The active-site Proton acceptor is Asp-215. Residues 215–217 carry the DGA/G motif; it reads DGA.

Belongs to the patatin family. Post-translationally, N-glycosylated. As to expression, tuber and stolon.

Its subcellular location is the vacuole. Its function is as follows. Probable lipolytic acyl hydrolase (LAH), an activity which is thought to be involved in the response of tubers to pathogens. In Solanum tuberosum (Potato), this protein is Patatin-T5.